The following is a 194-amino-acid chain: tRNA (guanine-N(1)-)-methyltransferase (194 aa).

S-adenosyl-L-methionine is bound by residues glycine 78 and 97–102 (IGDYVL).

It belongs to the RNA methyltransferase TrmD family. Homodimer.

It localises to the cytoplasm. It catalyses the reaction guanosine(37) in tRNA + S-adenosyl-L-methionine = N(1)-methylguanosine(37) in tRNA + S-adenosyl-L-homocysteine + H(+). Functionally, specifically methylates guanosine-37 in various tRNAs. This Mycoplasma mobile (strain ATCC 43663 / 163K / NCTC 11711) (Mesomycoplasma mobile) protein is tRNA (guanine-N(1)-)-methyltransferase.